The sequence spans 357 residues: 3-isopropylmalate dehydrogenase (357 aa).

75–88 is a binding site for NAD(+); the sequence is GPKWEHLPPAEQPE. Substrate is bound by residues arginine 96, arginine 106, arginine 135, and aspartate 224. Aspartate 224, aspartate 248, and aspartate 252 together coordinate Mg(2+). An NAD(+)-binding site is contributed by 282-294; it reads GSAPDIAGQGIAN.

It belongs to the isocitrate and isopropylmalate dehydrogenases family. LeuB type 1 subfamily. Homodimer. Mg(2+) is required as a cofactor. Mn(2+) serves as cofactor.

The protein resides in the cytoplasm. The enzyme catalyses (2R,3S)-3-isopropylmalate + NAD(+) = 4-methyl-2-oxopentanoate + CO2 + NADH. It functions in the pathway amino-acid biosynthesis; L-leucine biosynthesis; L-leucine from 3-methyl-2-oxobutanoate: step 3/4. In terms of biological role, catalyzes the oxidation of 3-carboxy-2-hydroxy-4-methylpentanoate (3-isopropylmalate) to 3-carboxy-4-methyl-2-oxopentanoate. The product decarboxylates to 4-methyl-2 oxopentanoate. In Desulfotalea psychrophila (strain LSv54 / DSM 12343), this protein is 3-isopropylmalate dehydrogenase.